The following is a 451-amino-acid chain: Bifunctional protein GlmU (451 aa).

A pyrophosphorylase region spans residues 1–230 (MNNPIAAIVL…PADVGGINSR (230 aa)). Residues 10-13 (LAAG), K24, Q74, 79-80 (GT), 102-104 (YGD), G142, E156, N171, and N228 each bind UDP-N-acetyl-alpha-D-glucosamine. D104 provides a ligand contact to Mg(2+). Residue N228 coordinates Mg(2+). The linker stretch occupies residues 231–251 (AELAAAEAQWQAFRREEAMAA). Residues 252-451 (GASLRAPETV…RKKKAAEQKK (200 aa)) form an N-acetyltransferase region. UDP-N-acetyl-alpha-D-glucosamine is bound by residues R317 and K335. H347 (proton acceptor) is an active-site residue. The UDP-N-acetyl-alpha-D-glucosamine site is built by Y350 and N361. Residues A364, 370–371 (NY), S389, A407, and R424 each bind acetyl-CoA.

This sequence in the N-terminal section; belongs to the N-acetylglucosamine-1-phosphate uridyltransferase family. It in the C-terminal section; belongs to the transferase hexapeptide repeat family. Homotrimer. The cofactor is Mg(2+).

It is found in the cytoplasm. It carries out the reaction alpha-D-glucosamine 1-phosphate + acetyl-CoA = N-acetyl-alpha-D-glucosamine 1-phosphate + CoA + H(+). The enzyme catalyses N-acetyl-alpha-D-glucosamine 1-phosphate + UTP + H(+) = UDP-N-acetyl-alpha-D-glucosamine + diphosphate. It participates in nucleotide-sugar biosynthesis; UDP-N-acetyl-alpha-D-glucosamine biosynthesis; N-acetyl-alpha-D-glucosamine 1-phosphate from alpha-D-glucosamine 6-phosphate (route II): step 2/2. It functions in the pathway nucleotide-sugar biosynthesis; UDP-N-acetyl-alpha-D-glucosamine biosynthesis; UDP-N-acetyl-alpha-D-glucosamine from N-acetyl-alpha-D-glucosamine 1-phosphate: step 1/1. Its pathway is bacterial outer membrane biogenesis; LPS lipid A biosynthesis. Its function is as follows. Catalyzes the last two sequential reactions in the de novo biosynthetic pathway for UDP-N-acetylglucosamine (UDP-GlcNAc). The C-terminal domain catalyzes the transfer of acetyl group from acetyl coenzyme A to glucosamine-1-phosphate (GlcN-1-P) to produce N-acetylglucosamine-1-phosphate (GlcNAc-1-P), which is converted into UDP-GlcNAc by the transfer of uridine 5-monophosphate (from uridine 5-triphosphate), a reaction catalyzed by the N-terminal domain. The sequence is that of Bifunctional protein GlmU from Sphingopyxis alaskensis (strain DSM 13593 / LMG 18877 / RB2256) (Sphingomonas alaskensis).